Here is a 92-residue protein sequence, read N- to C-terminus: Putative pterin-4-alpha-carbinolamine dehydratase (92 aa).

This sequence belongs to the pterin-4-alpha-carbinolamine dehydratase family.

It catalyses the reaction (4aS,6R)-4a-hydroxy-L-erythro-5,6,7,8-tetrahydrobiopterin = (6R)-L-erythro-6,7-dihydrobiopterin + H2O. The sequence is that of Putative pterin-4-alpha-carbinolamine dehydratase from Cereibacter sphaeroides (strain ATCC 17023 / DSM 158 / JCM 6121 / CCUG 31486 / LMG 2827 / NBRC 12203 / NCIMB 8253 / ATH 2.4.1.) (Rhodobacter sphaeroides).